A 466-amino-acid polypeptide reads, in one-letter code: Amino acid permease 4 (466 aa).

The Cytoplasmic segment spans residues 1 to 22 (MDVPRPAFKCFDDDGRLKRSGT). Helical transmembrane passes span 23 to 43 (VWTASAHIITAVIGSGVLSLA) and 44 to 64 (WAIGQLGWIAGPTVMLLFSFV). Residues 65-111 (TYYSSTLLSDCYRTGDPVSGKRNYTYMDAVRSILGGFRFKICGLIQY) lie on the Cytoplasmic side of the membrane. Residues 112-132 (LNLFGITVGYTIAASISMMAI) form a helical membrane-spanning segment. The Extracellular portion of the chain corresponds to 133-177 (KRSNCFHESGGKNPCHMSSNPYMIMFGVTEILLSQIKDFDQIWWL). The chain crosses the membrane as a helical span at residues 178–198 (SIVAAIMSFTYSAIGLALGII). At 199-226 (QVAANGVVKGSLTGISIGAVTQTQKIWR) the chain is on the cytoplasmic side. Residues 227–247 (TFQALGDIAFAYSYSVVLIEI) traverse the membrane as a helical segment. At 248–266 (QDTVRSPPAESKTMKIATR) the chain is on the extracellular side. A helical membrane pass occupies residues 267–287 (ISIAVTTTFYMLCGCMGYAAF). Topologically, residues 288-290 (GDK) are cytoplasmic. A helical transmembrane segment spans residues 291–311 (APGNLLTGFGFYNPFWLLDVA). At 312–313 (NA) the chain is on the extracellular side. The helical transmembrane segment at 314–334 (AIVIHLVGAYQVFAQPIFAFI) threads the bilayer. Residues 335 to 369 (EKQAAARFPDSDLVTKEYEIRIPGFRSPYKVNVFR) lie on the Cytoplasmic side of the membrane. The helical transmembrane segment at 370-390 (AVYRSGFVVLTTVISMLMPFF) threads the bilayer. Residues 391 to 392 (ND) lie on the Extracellular side of the membrane. Residues 393–413 (VVGILGALGFWPLTVYFPVEM) form a helical membrane-spanning segment. Residues 414–435 (YIRQRKVERWSMKWVCLQMLSC) lie on the Cytoplasmic side of the membrane. Residues 436-456 (GCLMITLVAGVGSIAGVMLDL) traverse the membrane as a helical segment. Over 457–466 (KVYKPFKTTY) the chain is Extracellular.

It belongs to the amino acid/polyamine transporter 2 family. Amino acid/auxin permease (AAAP) (TC 2.A.18.2) subfamily. In terms of tissue distribution, expressed in leaves, stems and flowers.

Its subcellular location is the cell membrane. Its activity is regulated as follows. Inhibited by 2,4-dinitrophenol. Its function is as follows. Amino acid-proton symporter. Stereospecific transporter with a broad specificity for neutral amino acids, favoring small amino acids such as alanine, asparagine and glutamine. Also accepts large aromatic residues such as in phenlalanine or tyrosine. The chain is Amino acid permease 4 (AAP4) from Arabidopsis thaliana (Mouse-ear cress).